The chain runs to 353 residues: 3-isopropylmalate dehydrogenase (353 aa).

4 residues coordinate substrate: arginine 97, arginine 107, arginine 135, and aspartate 219. Mg(2+) is bound by residues aspartate 219, aspartate 243, and aspartate 247.

The protein belongs to the isocitrate and isopropylmalate dehydrogenases family. LeuB type 1 subfamily. In terms of assembly, homodimer. Mg(2+) is required as a cofactor. Mn(2+) serves as cofactor.

It is found in the cytoplasm. The catalysed reaction is (2R,3S)-3-isopropylmalate + NAD(+) = 4-methyl-2-oxopentanoate + CO2 + NADH. The protein operates within amino-acid biosynthesis; L-leucine biosynthesis; L-leucine from 3-methyl-2-oxobutanoate: step 3/4. Functionally, catalyzes the oxidation of 3-carboxy-2-hydroxy-4-methylpentanoate (3-isopropylmalate) to 3-carboxy-4-methyl-2-oxopentanoate. The product decarboxylates to 4-methyl-2 oxopentanoate. This is 3-isopropylmalate dehydrogenase from Bacteroides fragilis (strain ATCC 25285 / DSM 2151 / CCUG 4856 / JCM 11019 / LMG 10263 / NCTC 9343 / Onslow / VPI 2553 / EN-2).